The primary structure comprises 102 residues: N(4)-acetylcytidine amidohydrolase (102 aa).

The region spanning 6-92 (TFFGRFEADI…VIKAIYPGLD (87 aa)) is the ASCH domain. Catalysis depends on lysine 20, which acts as the Proton acceptor. The active-site Nucleophile is the threonine 23. The active-site Proton donor is glutamate 73.

The protein belongs to the N(4)-acetylcytidine amidohydrolase family.

The catalysed reaction is N(4)-acetylcytidine + H2O = cytidine + acetate + H(+). It catalyses the reaction N(4)-acetyl-2'-deoxycytidine + H2O = 2'-deoxycytidine + acetate + H(+). The enzyme catalyses N(4)-acetylcytosine + H2O = cytosine + acetate + H(+). In terms of biological role, catalyzes the hydrolysis of N(4)-acetylcytidine (ac4C). This chain is N(4)-acetylcytidine amidohydrolase, found in Yersinia pseudotuberculosis serotype O:1b (strain IP 31758).